Consider the following 236-residue polypeptide: ATP synthase subunit 4, mitochondrial (236 aa).

Residues 1–29 constitute a mitochondrion transit peptide; sequence MAFRALTTKAAARPLLALGPRSVAMGARY.

It belongs to the eukaryotic ATPase subunit B family. F-type ATPases have 2 components, CF(1) - the catalytic core - and CF(0) - the membrane proton channel. In yeast, the dimeric form of ATP synthase consists of 17 polypeptides: alpha, beta, gamma, delta, epsilon, 4 (B), 5 (OSCP), 6 (A), 8, 9 (C), d, E (Tim11), f, g, h, i/j and k.

It localises to the mitochondrion. It is found in the mitochondrion inner membrane. Mitochondrial membrane ATP synthase (F(1)F(0) ATP synthase or Complex V) produces ATP from ADP in the presence of a proton gradient across the membrane which is generated by electron transport complexes of the respiratory chain. F-type ATPases consist of two structural domains, F(1) - containing the extramembraneous catalytic core, and F(0) - containing the membrane proton channel, linked together by a central stalk and a peripheral stalk. During catalysis, ATP synthesis in the catalytic domain of F(1) is coupled via a rotary mechanism of the central stalk subunits to proton translocation. Part of the complex F(0) domain and the peripheric stalk, which acts as a stator to hold the catalytic alpha(3)beta(3) subcomplex and subunit a/ATP6 static relative to the rotary elements. This Eremothecium gossypii (strain ATCC 10895 / CBS 109.51 / FGSC 9923 / NRRL Y-1056) (Yeast) protein is ATP synthase subunit 4, mitochondrial (ATP4).